The sequence spans 1040 residues: Multidrug resistance protein MdtB (1040 aa).

A run of 12 helical transmembrane segments spans residues 16–36 (FIMR…AGII), 347–367 (LMMA…NIPA), 369–389 (IIPG…MVFL), 396–416 (LTLM…IVVI), 440–460 (IGFT…PLLF), 472–492 (FAIT…TLTP), 537–557 (WLTL…WVFI), 863–883 (LGST…VLGI), 888–908 (FIHP…ALLA), 911–931 (IAGS…IGIV), 968–988 (ILMT…STGV), and 998–1018 (IGMV…TPVI).

The protein belongs to the resistance-nodulation-cell division (RND) (TC 2.A.6) family. MdtB subfamily. In terms of assembly, part of a tripartite efflux system composed of MdtA, MdtB and MdtC. MdtB forms a heteromultimer with MdtC.

The protein resides in the cell inner membrane. The chain is Multidrug resistance protein MdtB from Shigella boydii serotype 18 (strain CDC 3083-94 / BS512).